The chain runs to 98 residues: Carboxysome shell protein CsoS1C (98 aa).

Positions 8 to 93 (ALGMIETRGL…VHSEVENILP (86 aa)) constitute a BMC domain.

It belongs to the bacterial microcompartments protein family. CsoS1 subfamily. Homohexamer with a small central pore. Interacts with the N-terminus (residues 1-136) of RuBisCO (CbbL).

The protein localises to the carboxysome. Its function is as follows. One of shell proteins of the carboxysome, a polyhedral inclusion where RuBisCO (ribulose bisphosphate carboxylase, ccbL-ccbS) is sequestered. Assembles into hexamers which make sheets that form the facets of the polyhedral carboxysome. The shell probably limits the diffusion of CO(2) into and out of the carboxysome. There are estimated to be 2970 CsoS1A/CsoS1C proteins per carboxysome (the proteins differ by only 1 residue). Unlike beta-carboxysomes, alpha-carboxysomes (Cb) can form without cargo protein. CsoS2 is essential for Cb formation and is also capable of targeting foreign proteins to the Cb. The Cb shell assembles with the aid of CsoS2; CsoS1A, CsoS1B and CsoS1C form the majority of the shell while CsoS4A and CsoS4B form vertices. CsoS1D forms pseudohexamers that probably control metabolite flux into and out of the shell. The chain is Carboxysome shell protein CsoS1C from Halothiobacillus neapolitanus (strain ATCC 23641 / c2) (Thiobacillus neapolitanus).